A 356-amino-acid chain; its full sequence is Phenylalanine dehydrogenase (356 aa).

Arg43 lines the NAD(+) pocket. Lys67 provides a ligand contact to L-phenylalanine. Lys79 acts as the Proton donor/acceptor in catalysis. 118-119 (PD) is an L-phenylalanine binding site. Residues Asp119, Ser150, Thr154, 183–189 (GLGAVGG), 206–207 (DT), Arg211, 240–241 (AM), and 261–263 (AAN) each bind NAD(+). Residue Asn263 participates in L-phenylalanine binding.

This sequence belongs to the Glu/Leu/Phe/Val dehydrogenases family. As to quaternary structure, homotetramer, dimer of dimers.

It catalyses the reaction L-phenylalanine + NAD(+) + H2O = 3-phenylpyruvate + NH4(+) + NADH + H(+). It participates in amino-acid biosynthesis; L-phenylalanine biosynthesis; L-phenylalanine from phenylpyruvate (PDH route): step 1/1. Its activity is regulated as follows. Subject to competitive inhibition by 3-phenylpropionate for the conversion of L-phenylalanine to phenylpyruvate. Subject to competitive inhibition by D-phenylalanine for the conversion of phenylpyruvate to L-phenylalanine. In terms of biological role, catalyzes the reversible NAD(+)-dependent oxidative deamination of L-phenylalanine to phenylpyruvate. In Rhodococcus sp, this protein is Phenylalanine dehydrogenase.